The sequence spans 284 residues: MAFRPRKRFGQHWLNHEPTLQAIVAAADIQSGAPQSGSLRDRLLEIGPGMGVLTKQLLATGNPVVAVELDRDLCLKLRKKLGQRENFLLLEGDVLILDLNALLQDFPQFSPLNKVVANIPYNITSPILELLLGTIQKPRVPGFETIVLLVQKEIAERLTAQPSTKAYGALSVRMQYLARVDWIVDVPPKAFTPPPKVDSAVIRLTPYPVEQLPGDRRLLDQLLCLGFANRRKMLRNNLKGLIAPEQLTTLLEQLALPSTARAEDLSLEQWLELTNLLPTFLPPT.

Residues His12, Leu14, Gly47, Glu68, Asp93, and Asn118 each coordinate S-adenosyl-L-methionine.

Belongs to the class I-like SAM-binding methyltransferase superfamily. rRNA adenine N(6)-methyltransferase family. RsmA subfamily.

Its subcellular location is the cytoplasm. It catalyses the reaction adenosine(1518)/adenosine(1519) in 16S rRNA + 4 S-adenosyl-L-methionine = N(6)-dimethyladenosine(1518)/N(6)-dimethyladenosine(1519) in 16S rRNA + 4 S-adenosyl-L-homocysteine + 4 H(+). Functionally, specifically dimethylates two adjacent adenosines (A1518 and A1519) in the loop of a conserved hairpin near the 3'-end of 16S rRNA in the 30S particle. May play a critical role in biogenesis of 30S subunits. The protein is Ribosomal RNA small subunit methyltransferase A of Synechocystis sp. (strain ATCC 27184 / PCC 6803 / Kazusa).